A 292-amino-acid polypeptide reads, in one-letter code: MPAQRLDGRQLAAQLEEVMAAAIASGLPRAGRPPGLAVLRVGDDPASGVYVANKEKACARVGLVSHGAHLDAATPQAEIEAKLRQLNQDPAVDGILVQLPVPAGLDDRALLLELDPAKDADGLHPLNLGRLLRGEPGPRSCTPAGVMALLRSNGIDPAGKRAVVIGRSILVGQPMALMLQAANATVTVVHSRTADLAAHTREAEILVVAAGKPGMIGADHVRPGAAVVDVGIHRKPEGGLCGDVRSAEVEPIASALSPVPGGVGPMTVTMLLLNTVRAWSQRFDLPDPTPGY.

NADP(+) contacts are provided by residues 166-168 (GRS), S191, and I232.

This sequence belongs to the tetrahydrofolate dehydrogenase/cyclohydrolase family. Homodimer.

The catalysed reaction is (6R)-5,10-methylene-5,6,7,8-tetrahydrofolate + NADP(+) = (6R)-5,10-methenyltetrahydrofolate + NADPH. It carries out the reaction (6R)-5,10-methenyltetrahydrofolate + H2O = (6R)-10-formyltetrahydrofolate + H(+). The protein operates within one-carbon metabolism; tetrahydrofolate interconversion. Its function is as follows. Catalyzes the oxidation of 5,10-methylenetetrahydrofolate to 5,10-methenyltetrahydrofolate and then the hydrolysis of 5,10-methenyltetrahydrofolate to 10-formyltetrahydrofolate. In Synechococcus sp. (strain RCC307), this protein is Bifunctional protein FolD.